Reading from the N-terminus, the 1040-residue chain is Multidrug resistance protein MdtB (1040 aa).

Transmembrane regions (helical) follow at residues 16 to 36 (FIMR…AGII), 342 to 362 (DTQF…YLFL), 369 to 389 (IIPG…MVFL), 396 to 416 (LTLM…IVVI), 440 to 460 (IGFT…PLLF), 472 to 492 (FAVT…TLTP), 537 to 557 (WLTL…WVFI), 863 to 883 (LGST…VLGV), 888 to 908 (FIHP…ALLA), 911 to 931 (LAGS…IGIV), 968 to 988 (ILMT…STGV), and 998 to 1018 (IGMV…TPVI).

It belongs to the resistance-nodulation-cell division (RND) (TC 2.A.6) family. MdtB subfamily. As to quaternary structure, part of a tripartite efflux system composed of MdtA, MdtB and MdtC. MdtB forms a heteromultimer with MdtC.

It localises to the cell inner membrane. This Klebsiella pneumoniae subsp. pneumoniae (strain ATCC 700721 / MGH 78578) protein is Multidrug resistance protein MdtB.